Reading from the N-terminus, the 154-residue chain is MAARLYCQLDSSRDVLCLRPVGAESRGRPFSGPLGTLSSPSPSAVSSDHGAHLSLRGLPVCAFSSAGPCALRFTSARCMATTVNAHQILPKVLHKRTLGLPAMSTTDLEAYFKDCLFKDWEELGEEIRLKVFVLGGCRHKLVCAPSSCNFFTSA.

The mitochondrial targeting sequence stretch occupies residues 68 to 117; that stretch reads PCALRFTSARCMATTVNAHQILPKVLHKRTLGLPAMSTTDLEAYFKDCLF.

It belongs to the orthohepadnavirus protein X family. As to quaternary structure, may form homodimer. May interact with host CEBPA, CFLAR, CREB1, DDB1, E4F1, HBXIP, HSPD1/HSP60, NFKBIA, POLR2E and SMAD4. Interacts with host SMC5-SMC6 complex and induces its degradation. Interacts with host TRPC4AP; leading to prevent ubiquitination of TRPC4AP. Interacts with host PLSCR1; this interaction promotes ubiquitination and degradation of HBx and impairs HBx-mediated cell proliferation. A fraction may be phosphorylated in insect cells and HepG2 cells, a human hepatoblastoma cell line. Phosphorylated in vitro by host protein kinase C or mitogen-activated protein kinase. N-acetylated in insect cells.

It is found in the host cytoplasm. The protein localises to the host nucleus. Its subcellular location is the host mitochondrion. Multifunctional protein that plays a role in silencing host antiviral defenses and promoting viral transcription. Does not seem to be essential for HBV infection. May be directly involved in development of cirrhosis and liver cancer (hepatocellular carcinoma). Most of cytosolic activities involve modulation of cytosolic calcium. The effect on apoptosis is controversial depending on the cell types in which the studies have been conducted. May induce apoptosis by localizing in mitochondria and causing loss of mitochondrial membrane potential. May also modulate apoptosis by binding host CFLAR, a key regulator of the death-inducing signaling complex (DISC). Promotes viral transcription by using the host E3 ubiquitin ligase DDB1 to target the SMC5-SMC6 complex to proteasomal degradation. This host complex would otherwise bind to viral episomal DNA, and prevents its transcription. Moderately stimulates transcription of many different viral and cellular transcription elements. Promoters and enhancers stimulated by HBx contain DNA binding sites for NF-kappa-B, AP-1, AP-2, c-EBP, ATF/CREB, or the calcium-activated factor NF-AT. The protein is Protein X of Hepatitis B virus genotype A3 (isolate Cameroon/CMR983/1994) (HBV-A).